Reading from the N-terminus, the 308-residue chain is Ornithine carbamoyltransferase (308 aa).

Carbamoyl phosphate contacts are provided by residues 52–55 (STRT), glutamine 79, arginine 103, and 130–133 (HPLQ). L-ornithine contacts are provided by residues asparagine 162, aspartate 224, and 228–229 (SM). Carbamoyl phosphate contacts are provided by residues 264 to 265 (CL) and arginine 292.

It belongs to the aspartate/ornithine carbamoyltransferase superfamily. OTCase family.

Its subcellular location is the cytoplasm. The enzyme catalyses carbamoyl phosphate + L-ornithine = L-citrulline + phosphate + H(+). It functions in the pathway amino-acid biosynthesis; L-arginine biosynthesis; L-arginine from L-ornithine and carbamoyl phosphate: step 1/3. Its function is as follows. Reversibly catalyzes the transfer of the carbamoyl group from carbamoyl phosphate (CP) to the N(epsilon) atom of ornithine (ORN) to produce L-citrulline. This Pyrobaculum calidifontis (strain DSM 21063 / JCM 11548 / VA1) protein is Ornithine carbamoyltransferase.